The following is a 156-amino-acid chain: Succinate dehydrogenase assembly factor 2-B, mitochondrial (156 aa).

The transit peptide at 1-24 (MLRQFIISRVGRRLQLPMITQSRL) directs the protein to the mitochondrion.

This sequence belongs to the SDHAF2 family. In terms of assembly, interacts with the flavoprotein subunit within the SDH catalytic dimer.

Its subcellular location is the mitochondrion matrix. In terms of biological role, plays an essential role in the assembly of succinate dehydrogenase (SDH), an enzyme complex (also referred to as respiratory complex II) that is a component of both the tricarboxylic acid (TCA) cycle and the mitochondrial electron transport chain, and which couples the oxidation of succinate to fumarate with the reduction of ubiquinone (coenzyme Q) to ubiquinol. Required for flavinylation (covalent attachment of FAD) of the flavoprotein subunit of the SDH catalytic dimer. In Drosophila sechellia (Fruit fly), this protein is Succinate dehydrogenase assembly factor 2-B, mitochondrial.